Reading from the N-terminus, the 311-residue chain is ATP synthase gamma chain (311 aa).

Cys67 and Cys138 are joined by a disulfide.

This sequence belongs to the ATPase gamma chain family. In terms of assembly, F-type ATPases have 2 components, CF(1) - the catalytic core - and CF(0) - the membrane proton channel. CF(1) has five subunits: alpha(3), beta(3), gamma(1), delta(1), epsilon(1). CF(0) has three main subunits: a, b and c.

Its subcellular location is the cellular thylakoid membrane. Thiol-modulation by raising the activation threshold of the enzyme upon oxidation of the cysteines, thereby preventing wasteful ATP-hydrolysis. Produces ATP from ADP in the presence of a proton gradient across the membrane. The gamma chain is believed to be important in regulating ATPase activity and the flow of protons through the CF(0) complex. This Arthrospira platensis (Spirulina platensis) protein is ATP synthase gamma chain (atpG).